We begin with the raw amino-acid sequence, 426 residues long: Histidine--tRNA ligase (426 aa).

Belongs to the class-II aminoacyl-tRNA synthetase family. In terms of assembly, homodimer.

The protein resides in the cytoplasm. The enzyme catalyses tRNA(His) + L-histidine + ATP = L-histidyl-tRNA(His) + AMP + diphosphate + H(+). The chain is Histidine--tRNA ligase from Microcystis aeruginosa (strain NIES-843 / IAM M-2473).